Here is a 241-residue protein sequence, read N- to C-terminus: Caffeoyl-CoA O-methyltransferase (241 aa).

Blocked amino end (Met) is present on Met-1. Lys-15 is a substrate binding site. Residues Thr-57, Glu-79, 81–82 (GV), Ser-87, Asp-105, and Ala-134 each bind S-adenosyl-L-methionine. A substrate-binding site is contributed by Asp-157. Asp-157 serves as a coordination point for a divalent metal cation. Asp-159 is a binding site for S-adenosyl-L-methionine. The a divalent metal cation site is built by Asp-183 and Asn-184. Asn-188 serves as a coordination point for substrate.

Belongs to the class I-like SAM-binding methyltransferase superfamily. Cation-dependent O-methyltransferase family. CCoAMT subfamily. In terms of assembly, homodimer. A divalent metal cation is required as a cofactor. As to expression, roots and leaves.

The enzyme catalyses (E)-caffeoyl-CoA + S-adenosyl-L-methionine = (E)-feruloyl-CoA + S-adenosyl-L-homocysteine + H(+). Its pathway is aromatic compound metabolism; phenylpropanoid biosynthesis. In terms of biological role, methylates caffeoyl-CoA to feruloyl-CoA and 5-hydroxyferuloyl-CoA to sinapoyl-CoA. Plays a role in the synthesis of feruloylated polysaccharides. Involved in the reinforcement of the plant cell wall. Also involved in the responding to wounding or pathogen challenge by the increased formation of cell wall-bound ferulic acid polymers. The chain is Caffeoyl-CoA O-methyltransferase from Petroselinum crispum (Parsley).